Reading from the N-terminus, the 369-residue chain is Probable trehalose-phosphate phosphatase I (369 aa).

Belongs to the trehalose phosphatase family. A divalent metal cation is required as a cofactor.

The enzyme catalyses alpha,alpha-trehalose 6-phosphate + H2O = alpha,alpha-trehalose + phosphate. It functions in the pathway glycan biosynthesis; trehalose biosynthesis. Its function is as follows. Removes the phosphate from trehalose 6-phosphate to produce free trehalose. Trehalose accumulation in plant may improve abiotic stress tolerance. The protein is Probable trehalose-phosphate phosphatase I (TPPI) of Arabidopsis thaliana (Mouse-ear cress).